The following is a 430-amino-acid chain: uncharacterized protein (430 aa).

A run of 2 helical transmembrane segments spans residues 20–40 and 405–425; these read YLCL…GIMP and YIWW…LLVI.

It localises to the membrane. This is an uncharacterized protein from Schizosaccharomyces pombe (strain 972 / ATCC 24843) (Fission yeast).